Consider the following 356-residue polypeptide: UDP-N-acetylglucosamine--N-acetylmuramyl-(pentapeptide) pyrophosphoryl-undecaprenol N-acetylglucosamine transferase (356 aa).

UDP-N-acetyl-alpha-D-glucosamine contacts are provided by residues 13–15 (TGG), Asn125, Arg161, Ser189, Ile243, and Gln288.

It belongs to the glycosyltransferase 28 family. MurG subfamily.

Its subcellular location is the cell inner membrane. The catalysed reaction is di-trans,octa-cis-undecaprenyl diphospho-N-acetyl-alpha-D-muramoyl-L-alanyl-D-glutamyl-meso-2,6-diaminopimeloyl-D-alanyl-D-alanine + UDP-N-acetyl-alpha-D-glucosamine = di-trans,octa-cis-undecaprenyl diphospho-[N-acetyl-alpha-D-glucosaminyl-(1-&gt;4)]-N-acetyl-alpha-D-muramoyl-L-alanyl-D-glutamyl-meso-2,6-diaminopimeloyl-D-alanyl-D-alanine + UDP + H(+). It participates in cell wall biogenesis; peptidoglycan biosynthesis. In terms of biological role, cell wall formation. Catalyzes the transfer of a GlcNAc subunit on undecaprenyl-pyrophosphoryl-MurNAc-pentapeptide (lipid intermediate I) to form undecaprenyl-pyrophosphoryl-MurNAc-(pentapeptide)GlcNAc (lipid intermediate II). In Cupriavidus metallidurans (strain ATCC 43123 / DSM 2839 / NBRC 102507 / CH34) (Ralstonia metallidurans), this protein is UDP-N-acetylglucosamine--N-acetylmuramyl-(pentapeptide) pyrophosphoryl-undecaprenol N-acetylglucosamine transferase.